A 328-amino-acid chain; its full sequence is Malate dehydrogenase (328 aa).

Position 13 to 19 (13 to 19 (GGTGQIA)) interacts with NAD(+). Substrate is bound by residues arginine 94 and arginine 100. NAD(+) is bound by residues asparagine 107, glutamine 114, and 131–133 (VGN). Substrate-binding residues include asparagine 133 and arginine 164. Histidine 189 (proton acceptor) is an active-site residue.

Belongs to the LDH/MDH superfamily. MDH type 2 family.

It carries out the reaction (S)-malate + NAD(+) = oxaloacetate + NADH + H(+). Functionally, catalyzes the reversible oxidation of malate to oxaloacetate. This is Malate dehydrogenase from Chlamydia felis (strain Fe/C-56) (Chlamydophila felis).